A 436-amino-acid polypeptide reads, in one-letter code: MTTATAAPEIRKAGFFTEHLETADAEVFAAIRGELKRQQTKIELIASENITSLAVLEATGSVFTNKYAEGYPGKRYYGGCEYADVVENLAIERAKKLFGCNFANVQPNSGSQMNQAVFLALLQPGDSFMGLDLNSGGHLTHGSPVNMSGKWFKPIPYGVRADDHLIDMDEVARLARENKPKLIIAGGTAYSRVWDFKRFREIADEVGAWLLVDMSHFSGLVAGGAHPSPFPHAHVVTSTTHKSLRGPRSGIILTNDEDLAKKFNMAVFPGMQGGPLVHVIAAKAVAFGEALRPEFKAYAAQIVANARALAEAVKDAGLSVVSGGTDNHLMLVDLSAKDVTGKAAEKGLDRAWLTCNKNGVPFDKRSPFVTSGIRLGTPAGTTRGFREEEFRKIGALIGEVVDGLARNGEEGDGQVEQRVRDRVAELCAQFPIYPEL.

Residues Leu133 and 137–139 (GHL) contribute to the (6S)-5,6,7,8-tetrahydrofolate site. An N6-(pyridoxal phosphate)lysine modification is found at Lys242. A (6S)-5,6,7,8-tetrahydrofolate-binding site is contributed by 366–368 (SPF).

It belongs to the SHMT family. Homodimer. Requires pyridoxal 5'-phosphate as cofactor.

The protein resides in the cytoplasm. It carries out the reaction (6R)-5,10-methylene-5,6,7,8-tetrahydrofolate + glycine + H2O = (6S)-5,6,7,8-tetrahydrofolate + L-serine. It functions in the pathway one-carbon metabolism; tetrahydrofolate interconversion. The protein operates within amino-acid biosynthesis; glycine biosynthesis; glycine from L-serine: step 1/1. Catalyzes the reversible interconversion of serine and glycine with tetrahydrofolate (THF) serving as the one-carbon carrier. This reaction serves as the major source of one-carbon groups required for the biosynthesis of purines, thymidylate, methionine, and other important biomolecules. Also exhibits THF-independent aldolase activity toward beta-hydroxyamino acids, producing glycine and aldehydes, via a retro-aldol mechanism. The chain is Serine hydroxymethyltransferase from Novosphingobium aromaticivorans (strain ATCC 700278 / DSM 12444 / CCUG 56034 / CIP 105152 / NBRC 16084 / F199).